A 175-amino-acid polypeptide reads, in one-letter code: Ferritin light chain (175 aa).

At serine 2 the chain carries N-acetylserine. The Ferritin-like diiron domain maps to 7-156; that stretch reads QNYSTEVEAA…DHLTNLRRLA (150 aa). Positions 54, 57, 58, 61, and 64 each coordinate Fe cation.

Belongs to the ferritin family. As to quaternary structure, oligomer of 24 subunits. There are two types of subunits: L (light) chain and H (heavy) chain. The major chain can be light or heavy, depending on the species and tissue type. The functional molecule forms a roughly spherical shell with a diameter of 12 nm and contains a central cavity into which the insoluble mineral iron core is deposited. Interacts with NCOA4.

It localises to the cytoplasmic vesicle. It is found in the autophagosome. The protein resides in the cytoplasm. Its subcellular location is the autolysosome. Stores iron in a soluble, non-toxic, readily available form. Important for iron homeostasis. Iron is taken up in the ferrous form and deposited as ferric hydroxides after oxidation. Also plays a role in delivery of iron to cells. Mediates iron uptake in capsule cells of the developing kidney. Delivery to lysosomes by the cargo receptor NCOA4 for autophagic degradation and release or iron. This is Ferritin light chain (FTL) from Canis lupus familiaris (Dog).